Consider the following 355-residue polypeptide: 3-dehydroquinate synthase (355 aa).

NAD(+) is bound by residues 105–109 (GVVGD), 129–130 (TS), Lys-142, Lys-151, and 169–172 (TLKT). Positions 184, 246, and 263 each coordinate Zn(2+).

The protein belongs to the sugar phosphate cyclases superfamily. Dehydroquinate synthase family. Co(2+) is required as a cofactor. The cofactor is Zn(2+). Requires NAD(+) as cofactor.

It localises to the cytoplasm. It carries out the reaction 7-phospho-2-dehydro-3-deoxy-D-arabino-heptonate = 3-dehydroquinate + phosphate. It participates in metabolic intermediate biosynthesis; chorismate biosynthesis; chorismate from D-erythrose 4-phosphate and phosphoenolpyruvate: step 2/7. Catalyzes the conversion of 3-deoxy-D-arabino-heptulosonate 7-phosphate (DAHP) to dehydroquinate (DHQ). This chain is 3-dehydroquinate synthase, found in Streptococcus agalactiae serotype Ia (strain ATCC 27591 / A909 / CDC SS700).